We begin with the raw amino-acid sequence, 171 residues long: 3-hydroxydecanoyl-[acyl-carrier-protein] dehydratase (171 aa).

Residue His-70 is part of the active site.

Belongs to the thioester dehydratase family. FabA subfamily. Homodimer.

It localises to the cytoplasm. It catalyses the reaction a (3R)-hydroxyacyl-[ACP] = a (2E)-enoyl-[ACP] + H2O. The enzyme catalyses (3R)-hydroxydecanoyl-[ACP] = (2E)-decenoyl-[ACP] + H2O. It carries out the reaction (2E)-decenoyl-[ACP] = (3Z)-decenoyl-[ACP]. It participates in lipid metabolism; fatty acid biosynthesis. Necessary for the introduction of cis unsaturation into fatty acids. Catalyzes the dehydration of (3R)-3-hydroxydecanoyl-ACP to E-(2)-decenoyl-ACP and then its isomerization to Z-(3)-decenoyl-ACP. Can catalyze the dehydratase reaction for beta-hydroxyacyl-ACPs with saturated chain lengths up to 16:0, being most active on intermediate chain length. The chain is 3-hydroxydecanoyl-[acyl-carrier-protein] dehydratase from Methylobacillus flagellatus (strain ATCC 51484 / DSM 6875 / VKM B-1610 / KT).